We begin with the raw amino-acid sequence, 292 residues long: Histamine N-methyltransferase (292 aa).

Substrate is bound at residue Glu28. S-adenosyl-L-methionine contacts are provided by Gly60, Glu89, Gln94, Ser120, and Ile142. Residue Asn283 participates in substrate binding.

This sequence belongs to the class I-like SAM-binding methyltransferase superfamily. HNMT family. In terms of assembly, monomer.

The protein resides in the cytoplasm. It carries out the reaction histamine + S-adenosyl-L-methionine = N(tau)-methylhistamine + S-adenosyl-L-homocysteine + H(+). Its function is as follows. Inactivates histamine by N-methylation. Plays an important role in degrading histamine and in regulating the airway response to histamine. The sequence is that of Histamine N-methyltransferase (HNMT) from Homo sapiens (Human).